A 251-amino-acid chain; its full sequence is MSFTFKQFHIDDQQCGMAVSTDAVLLGAWAELTQSSHILDIGAGSGLLSLMAAQRSPHHTSIIAVEIDNAAAKACQFNIKQSPWSETVQLFHGAIQDFQQRHNNNDEPLFDHIICNPPYFEQGTQAKNSARADARHTNTLSFAELQNVISQLLAPQGTASVILPLQSLASFIQQLNAYGLFVAKQLDIISIEGKVANRSILAIQHNPTTAEPQTLTNPAVETQYHQMTIRDKQGRYSETMIDLCRPFYLKL.

It belongs to the methyltransferase superfamily. tRNA (adenine-N(6)-)-methyltransferase family.

The protein localises to the cytoplasm. It carries out the reaction adenosine(37) in tRNA1(Val) + S-adenosyl-L-methionine = N(6)-methyladenosine(37) in tRNA1(Val) + S-adenosyl-L-homocysteine + H(+). Specifically methylates the adenine in position 37 of tRNA(1)(Val) (anticodon cmo5UAC). The sequence is that of tRNA1(Val) (adenine(37)-N6)-methyltransferase from Shewanella frigidimarina (strain NCIMB 400).